The sequence spans 231 residues: Large ribosomal subunit protein uL1 (231 aa).

The protein belongs to the universal ribosomal protein uL1 family. In terms of assembly, part of the 50S ribosomal subunit.

Its function is as follows. Binds directly to 23S rRNA. The L1 stalk is quite mobile in the ribosome, and is involved in E site tRNA release. Protein L1 is also a translational repressor protein, it controls the translation of the L11 operon by binding to its mRNA. In Carboxydothermus hydrogenoformans (strain ATCC BAA-161 / DSM 6008 / Z-2901), this protein is Large ribosomal subunit protein uL1.